The following is a 616-amino-acid chain: Dihydroxy-acid dehydratase (616 aa).

Asp81 is a binding site for Mg(2+). Cys122 contributes to the [2Fe-2S] cluster binding site. Mg(2+) contacts are provided by Asp123 and Lys124. Position 124 is an N6-carboxylysine (Lys124). Cys195 is a [2Fe-2S] cluster binding site. A Mg(2+)-binding site is contributed by Glu491. Catalysis depends on Ser517, which acts as the Proton acceptor.

It belongs to the IlvD/Edd family. Homodimer. The cofactor is [2Fe-2S] cluster. It depends on Mg(2+) as a cofactor.

The enzyme catalyses (2R)-2,3-dihydroxy-3-methylbutanoate = 3-methyl-2-oxobutanoate + H2O. It catalyses the reaction (2R,3R)-2,3-dihydroxy-3-methylpentanoate = (S)-3-methyl-2-oxopentanoate + H2O. It functions in the pathway amino-acid biosynthesis; L-isoleucine biosynthesis; L-isoleucine from 2-oxobutanoate: step 3/4. Its pathway is amino-acid biosynthesis; L-valine biosynthesis; L-valine from pyruvate: step 3/4. Its function is as follows. Functions in the biosynthesis of branched-chain amino acids. Catalyzes the dehydration of (2R,3R)-2,3-dihydroxy-3-methylpentanoate (2,3-dihydroxy-3-methylvalerate) into 2-oxo-3-methylpentanoate (2-oxo-3-methylvalerate) and of (2R)-2,3-dihydroxy-3-methylbutanoate (2,3-dihydroxyisovalerate) into 2-oxo-3-methylbutanoate (2-oxoisovalerate), the penultimate precursor to L-isoleucine and L-valine, respectively. This is Dihydroxy-acid dehydratase from Escherichia coli O9:H4 (strain HS).